Reading from the N-terminus, the 211-residue chain is Outer-membrane lipoprotein carrier protein (211 aa).

Residues 1–24 (MRNRIIVSACAALAMFAIQAPAHA) form the signal peptide.

This sequence belongs to the LolA family. In terms of assembly, monomer.

Its subcellular location is the periplasm. Its function is as follows. Participates in the translocation of lipoproteins from the inner membrane to the outer membrane. Only forms a complex with a lipoprotein if the residue after the N-terminal Cys is not an aspartate (The Asp acts as a targeting signal to indicate that the lipoprotein should stay in the inner membrane). This is Outer-membrane lipoprotein carrier protein from Cupriavidus necator (strain ATCC 17699 / DSM 428 / KCTC 22496 / NCIMB 10442 / H16 / Stanier 337) (Ralstonia eutropha).